The sequence spans 558 residues: Formate--tetrahydrofolate ligase (558 aa).

65 to 72 contributes to the ATP binding site; that stretch reads TPAGEGKT.

The protein belongs to the formate--tetrahydrofolate ligase family.

It carries out the reaction (6S)-5,6,7,8-tetrahydrofolate + formate + ATP = (6R)-10-formyltetrahydrofolate + ADP + phosphate. Its pathway is one-carbon metabolism; tetrahydrofolate interconversion. The sequence is that of Formate--tetrahydrofolate ligase from Methylobacterium sp. (strain 4-46).